We begin with the raw amino-acid sequence, 357 residues long: Enoyl-[acyl-carrier-protein] reductase, mitochondrial (357 aa).

The transit peptide at 1-19 directs the protein to the mitochondrion; sequence MLRRGFLSRINAAQWSRQM. In terms of domain architecture, Enoyl reductase (ER) spans 36–352; sequence EVLQLVEDKL…FKGFTGKKYI (317 aa). Tyr-74 (proton donor) is an active-site residue. NADP(+) contacts are provided by residues Asn-147, 173-176, 196-198, 264-267, 289-291, Lys-349, and Lys-350; these read NSAV, RDR, YGGM, and FWM.

This sequence belongs to the zinc-containing alcohol dehydrogenase family. Quinone oxidoreductase subfamily. Homodimer. Expressed in the central nervous system.

The protein resides in the mitochondrion. It catalyses the reaction a 2,3-saturated acyl-[ACP] + NADP(+) = a (2E)-enoyl-[ACP] + NADPH + H(+). Its function is as follows. Catalyzes the NADPH-dependent reduction of trans-2-enoyl thioesters in mitochondrial fatty acid synthesis (fatty acid synthesis type II). Fatty acid chain elongation in mitochondria uses acyl carrier protein (ACP) as an acyl group carrier, but the enzyme accepts both ACP and CoA thioesters as substrates in vitro. Involved in iron homeostasis; affecting Fe-S cluster assembly and ceramide metabolism. Required for proper morphology and bioenergetic functions of mitochondria. Required for maintenance of neurons, including photoreceptor neurons. The sequence is that of Enoyl-[acyl-carrier-protein] reductase, mitochondrial from Drosophila melanogaster (Fruit fly).